The following is a 264-amino-acid chain: Thymidylate synthase (264 aa).

Arg21 lines the dUMP pocket. His51 is a (6R)-5,10-methylene-5,6,7,8-tetrahydrofolate binding site. Residue 126–127 (RR) participates in dUMP binding. Cys146 functions as the Nucleophile in the catalytic mechanism. DUMP contacts are provided by residues 166–169 (RSCD), Asn177, and 207–209 (HLY). Asp169 contributes to the (6R)-5,10-methylene-5,6,7,8-tetrahydrofolate binding site. Ala263 is a binding site for (6R)-5,10-methylene-5,6,7,8-tetrahydrofolate.

Belongs to the thymidylate synthase family. Bacterial-type ThyA subfamily. As to quaternary structure, homodimer.

Its subcellular location is the cytoplasm. The enzyme catalyses dUMP + (6R)-5,10-methylene-5,6,7,8-tetrahydrofolate = 7,8-dihydrofolate + dTMP. It participates in pyrimidine metabolism; dTTP biosynthesis. Functionally, catalyzes the reductive methylation of 2'-deoxyuridine-5'-monophosphate (dUMP) to 2'-deoxythymidine-5'-monophosphate (dTMP) while utilizing 5,10-methylenetetrahydrofolate (mTHF) as the methyl donor and reductant in the reaction, yielding dihydrofolate (DHF) as a by-product. This enzymatic reaction provides an intracellular de novo source of dTMP, an essential precursor for DNA biosynthesis. The chain is Thymidylate synthase from Sodalis glossinidius (strain morsitans).